A 461-amino-acid polypeptide reads, in one-letter code: Chromosomal replication initiator protein DnaA (461 aa).

The segment at Met1–Ala90 is domain I, interacts with DnaA modulators. Residues Pro91–Ser124 are domain II. Residues Asn125 to Ala341 form a domain III, AAA+ region region. Residues Gly169, Gly171, Lys172, and Thr173 each contribute to the ATP site. The domain IV, binds dsDNA stretch occupies residues Asn342 to Ser461.

The protein belongs to the DnaA family. As to quaternary structure, oligomerizes as a right-handed, spiral filament on DNA at oriC.

The protein resides in the cytoplasm. Functionally, plays an essential role in the initiation and regulation of chromosomal replication. ATP-DnaA binds to the origin of replication (oriC) to initiate formation of the DNA replication initiation complex once per cell cycle. Binds the DnaA box (a 9 base pair repeat at the origin) and separates the double-stranded (ds)DNA. Forms a right-handed helical filament on oriC DNA; dsDNA binds to the exterior of the filament while single-stranded (ss)DNA is stabiized in the filament's interior. The ATP-DnaA-oriC complex binds and stabilizes one strand of the AT-rich DNA unwinding element (DUE), permitting loading of DNA polymerase. After initiation quickly degrades to an ADP-DnaA complex that is not apt for DNA replication. Binds acidic phospholipids. This chain is Chromosomal replication initiator protein DnaA, found in Shewanella frigidimarina (strain NCIMB 400).